The following is an 883-amino-acid chain: Phosphoenolpyruvate carboxylase (883 aa).

Residues His138 and Lys546 contribute to the active site.

The protein belongs to the PEPCase type 1 family. It depends on Mg(2+) as a cofactor.

It catalyses the reaction oxaloacetate + phosphate = phosphoenolpyruvate + hydrogencarbonate. In terms of biological role, forms oxaloacetate, a four-carbon dicarboxylic acid source for the tricarboxylic acid cycle. This Erwinia tasmaniensis (strain DSM 17950 / CFBP 7177 / CIP 109463 / NCPPB 4357 / Et1/99) protein is Phosphoenolpyruvate carboxylase.